Here is a 209-residue protein sequence, read N- to C-terminus: Uracil phosphoribosyltransferase (209 aa).

5-phospho-alpha-D-ribose 1-diphosphate-binding positions include Arg79, Arg104, and 131-139 (DPMLATGNS). Uracil-binding positions include Ile194 and 199 to 201 (GDA). A 5-phospho-alpha-D-ribose 1-diphosphate-binding site is contributed by Asp200.

The protein belongs to the UPRTase family. Mg(2+) serves as cofactor.

The enzyme catalyses UMP + diphosphate = 5-phospho-alpha-D-ribose 1-diphosphate + uracil. It participates in pyrimidine metabolism; UMP biosynthesis via salvage pathway; UMP from uracil: step 1/1. With respect to regulation, allosterically activated by GTP. Functionally, catalyzes the conversion of uracil and 5-phospho-alpha-D-ribose 1-diphosphate (PRPP) to UMP and diphosphate. The polypeptide is Uracil phosphoribosyltransferase (Variovorax paradoxus (strain S110)).